A 397-amino-acid polypeptide reads, in one-letter code: GTPase Obg (397 aa).

Residues 1–159 (MKFVDEATII…RNLRLELKVL (159 aa)) form the Obg domain. The disordered stretch occupies residues 128-148 (TRFKSSVNRAPRQTSKGSEGE). Positions 129 to 144 (RFKSSVNRAPRQTSKG) are enriched in polar residues. Positions 160 to 333 (ADVGLLGLPN…LVQAVMRWIE (174 aa)) constitute an OBG-type G domain. GTP is bound by residues 166–173 (GLPNAGKS), 191–195 (FTTLV), 213–216 (DIPG), 283–286 (NKVD), and 314–316 (SAL). Mg(2+) contacts are provided by serine 173 and threonine 193. The span at 336 to 347 (AEQEADNPDFAE) shows a compositional bias: acidic residues. A disordered region spans residues 336–397 (AEQEADNPDF…YDVEVVYAPE (62 aa)). The span at 349–370 (EAARRRRMDEEARQKIEADRQA) shows a compositional bias: basic and acidic residues. The segment covering 378–390 (DDDDDFDDDDYDV) has biased composition (acidic residues).

Belongs to the TRAFAC class OBG-HflX-like GTPase superfamily. OBG GTPase family. As to quaternary structure, monomer. Mg(2+) is required as a cofactor.

It localises to the cytoplasm. Functionally, an essential GTPase which binds GTP, GDP and possibly (p)ppGpp with moderate affinity, with high nucleotide exchange rates and a fairly low GTP hydrolysis rate. Plays a role in control of the cell cycle, stress response, ribosome biogenesis and in those bacteria that undergo differentiation, in morphogenesis control. This chain is GTPase Obg, found in Marinobacter nauticus (strain ATCC 700491 / DSM 11845 / VT8) (Marinobacter aquaeolei).